Reading from the N-terminus, the 423-residue chain is UPF0597 protein Emin_0811 (423 aa).

Belongs to the UPF0597 family.

In Elusimicrobium minutum (strain Pei191), this protein is UPF0597 protein Emin_0811.